The chain runs to 302 residues: Ornithine carbamoyltransferase (302 aa).

Residues 52 to 55 (STRT), Gln-79, Arg-103, and 130 to 133 (HPCQ) each bind carbamoyl phosphate. Residues Asn-161, Asp-221, and 225–226 (SM) contribute to the L-ornithine site. Carbamoyl phosphate is bound by residues 261-262 (CL) and Arg-289.

It belongs to the aspartate/ornithine carbamoyltransferase superfamily. OTCase family.

Its subcellular location is the cytoplasm. It catalyses the reaction carbamoyl phosphate + L-ornithine = L-citrulline + phosphate + H(+). It functions in the pathway amino-acid biosynthesis; L-arginine biosynthesis; L-arginine from L-ornithine and carbamoyl phosphate: step 1/3. Functionally, reversibly catalyzes the transfer of the carbamoyl group from carbamoyl phosphate (CP) to the N(epsilon) atom of ornithine (ORN) to produce L-citrulline. The sequence is that of Ornithine carbamoyltransferase from Methanospirillum hungatei JF-1 (strain ATCC 27890 / DSM 864 / NBRC 100397 / JF-1).